Reading from the N-terminus, the 647-residue chain is Protein cueball (647 aa).

A signal peptide spans 1–22; that stretch reads MLWCPSVLVPLIAVAACLPVLA. Over 23 to 534 the chain is Extracellular; sequence IGTPLEWEFA…CMTPSPWTSN (512 aa). Asn-80 and Asn-106 each carry an N-linked (GlcNAc...) asparagine glycan. LDL-receptor class B repeat units lie at residues 119 to 166, 167 to 211, and 212 to 257; these read RNLF…DVCR, RKLY…DQLS, and DRIF…TNDA. A glycan (N-linked (GlcNAc...) asparagine) is linked at Asn-175. A glycan (N-linked (GlcNAc...) asparagine) is linked at Asn-316. 2 consecutive EGF-like domains span residues 365-401 and 436-473; these read DEKTAQLERDHCLNGGTYIADRVLCICPTGFKGSRCE and EISKCSGLCLNGGHCKLEDISEKPSCECPHNFAGERCE. 5 cysteine pairs are disulfide-bonded: Cys-376–Cys-389, Cys-391–Cys-400, Cys-440–Cys-450, Cys-444–Cys-461, and Cys-463–Cys-472. A glycan (N-linked (GlcNAc...) asparagine) is linked at Asn-475. A helical membrane pass occupies residues 535 to 555; sequence VIIVLVLGIVSCFFLVAVIVH. Residues 556 to 647 lie on the Cytoplasmic side of the membrane; that stretch reads GFRRLYKPKR…LIHNMDDDLY (92 aa).

It belongs to the cueball family.

It localises to the cell membrane. Its function is as follows. Has a role in spermatogenesis and oogenesis. The chain is Protein cueball from Drosophila pseudoobscura pseudoobscura (Fruit fly).